The chain runs to 118 residues: Immunoglobulin heavy variable 3-9 (118 aa).

An N-terminal signal peptide occupies residues 1–19 (MELGLSWIFLLAILKGVQC). Positions 20-44 (EVQLVESGGGLVQPGRSLRLSCAAS) are framework-1. The region spanning 20–118 (EVQLVESGGG…DTALYYCAKD (99 aa)) is the Ig-like domain. Residues Cys-41 and Cys-115 are joined by a disulfide bond. Residues 45–52 (GFTFDDYA) are complementarity-determining-1. The segment at 53-69 (MHWVRQAPGKGLEWVSG) is framework-2. Positions 70–77 (ISWNSGSI) are complementarity-determining-2. The tract at residues 78 to 115 (GYADSVKGRFTISRDNAKNSLYLQMNSLRAEDTALYYC) is framework-3. The interval 116-118 (AKD) is complementarity-determining-3.

Immunoglobulins are composed of two identical heavy chains and two identical light chains; disulfide-linked.

Its subcellular location is the secreted. The protein localises to the cell membrane. Functionally, v region of the variable domain of immunoglobulin heavy chains that participates in the antigen recognition. Immunoglobulins, also known as antibodies, are membrane-bound or secreted glycoproteins produced by B lymphocytes. In the recognition phase of humoral immunity, the membrane-bound immunoglobulins serve as receptors which, upon binding of a specific antigen, trigger the clonal expansion and differentiation of B lymphocytes into immunoglobulins-secreting plasma cells. Secreted immunoglobulins mediate the effector phase of humoral immunity, which results in the elimination of bound antigens. The antigen binding site is formed by the variable domain of one heavy chain, together with that of its associated light chain. Thus, each immunoglobulin has two antigen binding sites with remarkable affinity for a particular antigen. The variable domains are assembled by a process called V-(D)-J rearrangement and can then be subjected to somatic hypermutations which, after exposure to antigen and selection, allow affinity maturation for a particular antigen. This Homo sapiens (Human) protein is Immunoglobulin heavy variable 3-9.